The chain runs to 1185 residues: 1-phosphatidylinositol 4,5-bisphosphate phosphodiesterase beta-2 (1185 aa).

The PI-PLC X-box domain occupies 312 to 463 (HDMTQPLNHY…LRGKILIKNK (152 aa)). His-327 is an active-site residue. Ca(2+)-binding residues include Asn-328, Glu-357, and Asp-359. Residue His-374 is part of the active site. A Ca(2+)-binding site is contributed by Glu-408. The disordered stretch occupies residues 460 to 533 (IKNKKNQFSG…EEIKKMQSDE (74 aa)). Polar residues predominate over residues 465–476 (NQFSGPTSSSKD). Residues 501–524 (EGTELEEEEVEEEEEEESGNLDEE) are compositionally biased toward acidic residues. Residues 546 to 662 (MSSLVNYIQP…GYLLKHEFMR (117 aa)) form the PI-PLC Y-box domain. Residues 662–790 (RRPDKQFNPF…CLHSESNMPL (129 aa)) enclose the C2 domain. 2 disordered regions span residues 859–888 (LAPT…RTAS) and 943–979 (GACK…VDGR). A compositionally biased stretch (basic and acidic residues) spans 872 to 888 (GAREEAMKEAAEPRTAS). The residue at position 953 (Ser-953) is a Phosphoserine. The stretch at 988–1147 (ELELLRQGEE…VKESVRACLR (160 aa)) forms a coiled coil.

Interacts with RAC1. Forms a complex composed of at least WDR26, a G-beta:gamma unit, and PLCB2. It depends on Ca(2+) as a cofactor.

It catalyses the reaction a 1,2-diacyl-sn-glycero-3-phospho-(1D-myo-inositol-4,5-bisphosphate) + H2O = 1D-myo-inositol 1,4,5-trisphosphate + a 1,2-diacyl-sn-glycerol + H(+). The enzyme catalyses a 1,2-diacyl-sn-glycero-3-phospho-(1D-myo-inositol) + H2O = 1D-myo-inositol 1-phosphate + a 1,2-diacyl-sn-glycerol + H(+). Functionally, the production of the second messenger molecules diacylglycerol (DAG) and inositol 1,4,5-trisphosphate (IP3) is mediated by activated phosphatidylinositol-specific phospholipase C enzymes. In neutrophils, participates in a phospholipase C-activating N-formyl peptide-activated GPCR (G protein-coupled receptor) signaling pathway by promoting RASGRP4 activation by DAG, to promote neutrophil functional responses. This chain is 1-phosphatidylinositol 4,5-bisphosphate phosphodiesterase beta-2, found in Homo sapiens (Human).